The chain runs to 468 residues: Na(+)/H(+) antiporter (468 aa).

8 consecutive transmembrane segments (helical) span residues 12–32, 36–56, 81–96, 103–123, 133–153, 169–189, 204–224, and 258–278; these read HLALIVAGGFITFFCYFSEVF, LLVGEAVLGSITGLIFGPHAA, DVRVFASAIELPGAYF, IIVMLLPVMAYGWLVTAGFAY, GSLLIAGCITSTDPVLSALIV, LLIAESGCNDGMAVPFFYFAI, WVLLVVLYECAFGIFFGCVIG, and GIGTIIGVDDLLMSFFAGILF. An N-linked (GlcNAc...) asparagine glycan is attached at asparagine 287. Residues 293 to 313 form a helical membrane-spanning segment; it reads VPAFIDQTFSLLFFTYYGTII. Asparagine 319 is a glycosylation site (N-linked (GlcNAc...) asparagine). The next 3 helical transmembrane spans lie at 320-340, 362-382, and 408-428; these read WSVEGLPVWRLIVFSILTLVC, ALFVGHFGPIGVCAVYMAFLA, and IIWPIISFVILSSIIVHGFSI. Phosphoserine occurs at positions 449 and 451.

The protein belongs to the fungal Na(+)/H(+) exchanger family.

It localises to the cell membrane. Sodium export from cell, takes up external protons in exchange for internal sodium ions. Involved in regulation of pH. This chain is Na(+)/H(+) antiporter, found in Schizosaccharomyces pombe (strain 972 / ATCC 24843) (Fission yeast).